Reading from the N-terminus, the 200-residue chain is Transgelin (200 aa).

Ser2 bears the N-acetylserine mark. Residue Ser11 is modified to Phosphoserine. Positions 26-136 constitute a Calponin-homology (CH) domain; sequence PEAIQNIKIW…QTLKSLSRYA (111 aa). A disordered region spans residues 144 to 168; sequence FPVLGPQLSTKKPRPPVKSKPKHLQ. Residues 151-164 form an interaction with SH3 domain of ABP1 region; it reads LSTKKPRPPVKSKP. The segment covering 154 to 165 has biased composition (basic residues); it reads KKPRPPVKSKPK.

In terms of assembly, binds to actin. Interacts with ABP1.

It localises to the cytoplasm. Its subcellular location is the cytoskeleton. The protein localises to the actin patch. Has actin-binding and actin-bundling activity. Stabilizes actin filaments against disassembly. The protein is Transgelin (SCP1) of Saccharomyces cerevisiae (strain ATCC 204508 / S288c) (Baker's yeast).